The following is a 358-amino-acid chain: UPF0421 protein BT9727_2513 (358 aa).

The next 4 helical transmembrane spans lie at 19-39 (IAVF…IFAV), 74-94 (FTFF…FTIV), 109-129 (TLTA…AFLI), and 131-151 (LATT…ILPP).

This sequence belongs to the UPF0421 family.

The protein resides in the cell membrane. In Bacillus thuringiensis subsp. konkukian (strain 97-27), this protein is UPF0421 protein BT9727_2513.